The following is a 767-amino-acid chain: ABC transporter B family member 4 (767 aa).

Positions 81-104 (NYSSSSNSGNNNNNNYNNKNNNNN) are disordered. 5 helical membrane-spanning segments follow: residues 208 to 228 (IWLF…GLQI), 252 to 272 (AIFI…MISV), 324 to 344 (VSLG…LILI), 350 to 370 (LGMM…AGWL), and 429 to 449 (IGIF…LVYW). In terms of domain architecture, ABC transmembrane type-1 spans 211–491 (FGFGIITAFF…LSILFTQIMS (281 aa)). An ABC transporter domain is found at 524–760 (IKFINVDFKY…KGLYYKLVQR (237 aa)). 559-566 (GSSGGGKS) contacts ATP.

It belongs to the ABC transporter superfamily. ABCB family. Multidrug resistance exporter (TC 3.A.1.201) subfamily.

It is found in the membrane. This chain is ABC transporter B family member 4 (abcB4), found in Dictyostelium discoideum (Social amoeba).